The chain runs to 313 residues: Tyrosine recombinase XerC (313 aa).

The Core-binding (CB) domain occupies 1-85; it reads MNDQVEAFLR…AVKSFFAFLT (85 aa). A Tyr recombinase domain is found at 106–291; that stretch reads DLPRALTPHQ…NHASSAQPVR (186 aa). Active-site residues include Arg147, Lys171, His243, Arg246, and His269. The active-site O-(3'-phospho-DNA)-tyrosine intermediate is Tyr278.

Belongs to the 'phage' integrase family. XerC subfamily. As to quaternary structure, forms a cyclic heterotetrameric complex composed of two molecules of XerC and two molecules of XerD.

It is found in the cytoplasm. In terms of biological role, site-specific tyrosine recombinase, which acts by catalyzing the cutting and rejoining of the recombining DNA molecules. The XerC-XerD complex is essential to convert dimers of the bacterial chromosome into monomers to permit their segregation at cell division. It also contributes to the segregational stability of plasmids. This chain is Tyrosine recombinase XerC, found in Roseiflexus sp. (strain RS-1).